Reading from the N-terminus, the 160-residue chain is Putative pre-16S rRNA nuclease (160 aa).

The protein belongs to the YqgF nuclease family.

The protein localises to the cytoplasm. Could be a nuclease involved in processing of the 5'-end of pre-16S rRNA. This is Putative pre-16S rRNA nuclease from Cutibacterium acnes (strain DSM 16379 / KPA171202) (Propionibacterium acnes).